A 1530-amino-acid polypeptide reads, in one-letter code: Synaptonemal complex protein 2 (1530 aa).

Residues 439-461 (EKSKSPKEFAKPSKYIKNSDKGN) are compositionally biased toward basic and acidic residues. Residues 439 to 480 (EKSKSPKEFAKPSKYIKNSDKGNRNNSQLEKTTPSKRKMSEA) are disordered. Residues Ser-457 and Ser-465 each carry the phosphoserine modification. A Phosphothreonine modification is found at Thr-471. A phosphoserine mark is found at Ser-494, Ser-519, Ser-529, and Ser-538. The interval 496 to 555 (VLFSNTSIPPRRRRIKPPLQMTSSAEKPSVSQTSENRVDNAASLKSRSSEGRHRRDNIDK) is disordered. Positions 515–530 (QMTSSAEKPSVSQTSE) are enriched in polar residues. The span at 542–555 (RSSEGRHRRDNIDK) shows a compositional bias: basic and acidic residues. Position 619 is a phosphothreonine (Thr-619). Disordered stretches follow at residues 653 to 676 (QKSSSSISDHNSEGTGKVKYKKEQ), 693 to 717 (HNQQQNHPKYSGQKNTENAKQSDWP), and 755 to 795 (DKNP…SKGK). Residues Ser-660 and Ser-664 each carry the phosphoserine modification. Composition is skewed to polar residues over residues 695-713 (QQQNHPKYSGQKNTENAKQ) and 755-764 (DKNPSASKNV). Ser-936 carries the post-translational modification Phosphoserine. Thr-938 carries the post-translational modification Phosphothreonine. The disordered stretch occupies residues 962 to 1003 (QLIDYSRNKNVKNHKSGKSRSSLEKGQPSSKMTPSKNITKKM). The segment covering 970-979 (KNVKNHKSGK) has biased composition (basic residues). A compositionally biased stretch (polar residues) spans 988–998 (QPSSKMTPSKN). Ser-1136, Ser-1138, Ser-1145, Ser-1161, and Ser-1177 each carry phosphoserine. At Thr-1189 the chain carries Phosphothreonine. Phosphoserine occurs at positions 1204, 1234, 1253, 1295, and 1297. Position 1339 is a phosphothreonine (Thr-1339).

It belongs to the SYCP2 family. Component of the lateral elements of synaptonemal complexes. Heterodimer with SYCP3. Interacts with SMC1A and SMC3. Interacts with TEX11. In terms of processing, phosphorylated.

It is found in the nucleus. The protein localises to the chromosome. Its function is as follows. Major component of the axial/lateral elements of synaptonemal complexes (SCS) during meiotic prophase. Plays a role in the assembly of synaptonemal complexes. Required for normal meiotic chromosome synapsis during oocyte and spermatocyte development and for normal male and female fertility. Required for insertion of SYCP3 into synaptonemal complexes. May be involved in the organization of chromatin by temporarily binding to DNA scaffold attachment regions. Requires SYCP3, but not SYCP1, in order to be incorporated into the axial/lateral elements. This is Synaptonemal complex protein 2 (SYCP2) from Homo sapiens (Human).